The chain runs to 862 residues: Probable inorganic carbon transporter subunit DabA (862 aa).

Zn(2+) contacts are provided by C365, D367, H540, and C555.

Belongs to the inorganic carbon transporter (TC 9.A.2) DabA family. Forms a complex with DabB. Zn(2+) serves as cofactor.

It is found in the cell inner membrane. Functionally, part of an energy-coupled inorganic carbon pump. The polypeptide is Probable inorganic carbon transporter subunit DabA (Vibrio cholerae serotype O1 (strain ATCC 39315 / El Tor Inaba N16961)).